The chain runs to 534 residues: MADPQATNGTGAVCAERDASDVGDVSDVGDARDEGAGRVVAVRGAVVDVAFDGGALPALNEALTIPVDGAAPILAEVHAHLSDAAVRALALGPTGGLRRGAAVRATGGPIRVPVGDAVLGRLLSVTGAPGDDGAALAADVERRPIHRGAPLLAEQKSANALFATGIKVIDLLAPLAQGGKAAMFGGAGVGKTVFVMELIHAMVERYRGISVFAGIGERSREGHEMLLDMRGSGVLGRTVLVYGQMNEPPGARWRVPLTALAIAEYFRDERAQNVLLLMDNVFRFVQAGAEVSGLLGRLPSRVGYQPTLASEVAALQERIASVEGAAVTAIEAVYVPADDFTDPAVTAIAAHVDSMVVLSRAMAAEGMYPAIDPVASSSILLDPLVVGEAHVEVAIEVRRVIEHYRELQDVIALLGIDELGADDRRLVGRARRLQRFLTQPFAVTEAFTGQAGASVEIADTIAGCRAILRGDCDDWRESSLYMVGTLDDARRKEAAAREADARREAAAAASGAGPGTTSDPASGSAEPQGARHGR.

185–192 (GGAGVGKT) serves as a coordination point for ATP. The segment covering 494–505 (AAAREADARREA) has biased composition (basic and acidic residues). The segment at 494–534 (AAAREADARREAAAAASGAGPGTTSDPASGSAEPQGARHGR) is disordered.

Belongs to the ATPase alpha/beta chains family. F-type ATPases have 2 components, CF(1) - the catalytic core - and CF(0) - the membrane proton channel. CF(1) has five subunits: alpha(3), beta(3), gamma(1), delta(1), epsilon(1). CF(0) has three main subunits: a(1), b(2) and c(9-12). The alpha and beta chains form an alternating ring which encloses part of the gamma chain. CF(1) is attached to CF(0) by a central stalk formed by the gamma and epsilon chains, while a peripheral stalk is formed by the delta and b chains.

The protein localises to the cell inner membrane. It catalyses the reaction ATP + H2O + 4 H(+)(in) = ADP + phosphate + 5 H(+)(out). Produces ATP from ADP in the presence of a proton gradient across the membrane. The catalytic sites are hosted primarily by the beta subunits. This chain is ATP synthase subunit beta 2, found in Burkholderia mallei (strain NCTC 10247).